Consider the following 701-residue polypeptide: Protein UL29/UL28 (701 aa).

The disordered stretch occupies residues 1 to 33 (MSGRRKGCSAATASSSSSSPPSRLPPLPGHARR).

Belongs to the herpesviridae US22 family. As to quaternary structure, interacts with UL38 and host HDAC1; these interactions are necessary for the HDAC1 interaction with UL38. Interacts with host MTA2.

It is found in the virion. The protein resides in the host nucleus. The protein localises to the host cytoplasm. Contributes to activation of immediate-early gene expression. The protein is Protein UL29/UL28 (UL29) of Homo sapiens (Human).